The following is a 311-amino-acid chain: Porphobilinogen deaminase (311 aa).

At C241 the chain carries S-(dipyrrolylmethanemethyl)cysteine.

The protein belongs to the HMBS family. In terms of assembly, monomer. Dipyrromethane serves as cofactor.

The catalysed reaction is 4 porphobilinogen + H2O = hydroxymethylbilane + 4 NH4(+). Its pathway is porphyrin-containing compound metabolism; protoporphyrin-IX biosynthesis; coproporphyrinogen-III from 5-aminolevulinate: step 2/4. Its function is as follows. Tetrapolymerization of the monopyrrole PBG into the hydroxymethylbilane pre-uroporphyrinogen in several discrete steps. In Campylobacter curvus (strain 525.92), this protein is Porphobilinogen deaminase.